Here is a 166-residue protein sequence, read N- to C-terminus: Small ribosomal subunit protein uS5 (166 aa).

The region spanning 12–75 (YIEKLVQVNR…EAARRNMIQV (64 aa)) is the S5 DRBM domain.

This sequence belongs to the universal ribosomal protein uS5 family. Part of the 30S ribosomal subunit. Contacts proteins S4 and S8.

In terms of biological role, with S4 and S12 plays an important role in translational accuracy. Functionally, located at the back of the 30S subunit body where it stabilizes the conformation of the head with respect to the body. This Pseudomonas entomophila (strain L48) protein is Small ribosomal subunit protein uS5.